The sequence spans 319 residues: Protein StrN (319 aa).

It functions in the pathway antibiotic biosynthesis; streptomycin biosynthesis. The polypeptide is Protein StrN (strN) (Streptomyces griseus).